Here is a 110-residue protein sequence, read N- to C-terminus: UPF0145 protein (110 aa).

Belongs to the UPF0145 family.

This Listeria welshimeri protein is UPF0145 protein.